The primary structure comprises 869 residues: Kinesin-like protein KIN-10A (869 aa).

A compositionally biased stretch (polar residues) spans 1 to 36; the sequence is MAPTPSSSRSNQTQYTLIRTPQTKQRLNFHSKTPNP. Positions 1-50 are disordered; sequence MAPTPSSSRSNQTQYTLIRTPQTKQRLNFHSKTPNPDGSKDPSPPEHPVE. Over residues 38-50 the composition is skewed to basic and acidic residues; sequence GSKDPSPPEHPVE. Residues 48 to 367 form the Kinesin motor domain; that stretch reads PVEVIGRIRD…LEYGAKAKCI (320 aa). An ATP-binding site is contributed by 129-136; the sequence is GPTGAGKS. A coiled-coil region spans residues 393 to 515; that stretch reads RIAAMDEFII…EIEVEFRRSN (123 aa).

The protein belongs to the TRAFAC class myosin-kinesin ATPase superfamily. Kinesin family. KIN-10 subfamily. Binds microtubules.

The protein localises to the cytoplasm. It localises to the cytoskeleton. It is found in the phragmoplast. In terms of biological role, probable plus end-directed motor protein that may contribute to the transport of Golgi-derived vesicles in the phragmoplast. The protein is Kinesin-like protein KIN-10A of Arabidopsis thaliana (Mouse-ear cress).